The sequence spans 96 residues: UPF0235 protein YggU (96 aa).

It belongs to the UPF0235 family.

This is UPF0235 protein YggU from Salmonella agona (strain SL483).